A 695-amino-acid chain; its full sequence is DNA ligase (695 aa).

Residues 44–48 (DAEYD), 93–94 (SL), and Glu-123 each bind NAD(+). Lys-125 (N6-AMP-lysine intermediate) is an active-site residue. Residues Arg-146, Glu-184, Lys-300, and Lys-324 each coordinate NAD(+). 4 residues coordinate Zn(2+): Cys-418, Cys-421, Cys-436, and Cys-442. In terms of domain architecture, BRCT spans 605 to 694 (SAAKPLAGIT…PDAARSMAQR (90 aa)).

It belongs to the NAD-dependent DNA ligase family. LigA subfamily. The cofactor is Mg(2+). Mn(2+) is required as a cofactor.

The catalysed reaction is NAD(+) + (deoxyribonucleotide)n-3'-hydroxyl + 5'-phospho-(deoxyribonucleotide)m = (deoxyribonucleotide)n+m + AMP + beta-nicotinamide D-nucleotide.. Functionally, DNA ligase that catalyzes the formation of phosphodiester linkages between 5'-phosphoryl and 3'-hydroxyl groups in double-stranded DNA using NAD as a coenzyme and as the energy source for the reaction. It is essential for DNA replication and repair of damaged DNA. This is DNA ligase from Acidothermus cellulolyticus (strain ATCC 43068 / DSM 8971 / 11B).